A 425-amino-acid polypeptide reads, in one-letter code: Nuclear hormone receptor family member nhr-13 (425 aa).

A DNA-binding region (nuclear receptor) is located at residues 5–83 (PNSCEVCSSS…IGMKPLLVKS (79 aa)). NR C4-type zinc fingers lie at residues 11-30 (CSSS…CKAC) and 46-71 (CIDQ…LKKC). The interval 108-148 (VKENSEEIQNDDDPQESDAEMENESTPGPSSEPSENVSAEN) is disordered. A compositionally biased stretch (acidic residues) spans 113–130 (EEIQNDDDPQESDAEMEN). The segment covering 131–142 (ESTPGPSSEPSE) has biased composition (low complexity). The 268-residue stretch at 147 to 414 (ENQETVTKFL…KSMISLTSFW (268 aa)) folds into the NR LBD domain.

This sequence belongs to the nuclear hormone receptor family. In terms of assembly, may interact with nuclear hormone receptor nhr-49.

It localises to the nucleus. Its function is as follows. Orphan nuclear receptor. Involved in regulating fatty acid desaturase genes, acting in concert with nuclear hormone receptor nhr-49. The sequence is that of Nuclear hormone receptor family member nhr-13 (nhr-13) from Caenorhabditis elegans.